A 274-amino-acid chain; its full sequence is MGQKINPHGFRLGITTDWKSRWYADKQYAEYVKEDVAIRRLLSSGLERAGIADVEIERTRDRVRVDIHTARPGIVIGRRGTEADRIRADLEKLTGKQVQLNILEVKNPESQAQLVAQGVAEQLSNRVAFRRAMRKAIQSAMRQPNVKGIRVQCSGRLGGAEMSRSEFYREGRVPLHTLRADIDYGLYEAKTTFGRIGVKVWIYKGDIVGGKRELAAAAPAGADRPRRERPSGTRPRRSGASGTTATGTDAGRAAGGEEAAPDAAAPVEAQSTES.

The KH type-2 domain occupies 38-106 (IRRLLSSGLE…QVQLNILEVK (69 aa)). The tract at residues 215 to 274 (AAAAPAGADRPRRERPSGTRPRRSGASGTTATGTDAGRAAGGEEAAPDAAAPVEAQSTES) is disordered. Over residues 238–266 (SGASGTTATGTDAGRAAGGEEAAPDAAAP) the composition is skewed to low complexity.

Belongs to the universal ribosomal protein uS3 family. Part of the 30S ribosomal subunit. Forms a tight complex with proteins S10 and S14.

Functionally, binds the lower part of the 30S subunit head. Binds mRNA in the 70S ribosome, positioning it for translation. In Mycobacterium tuberculosis (strain ATCC 25177 / H37Ra), this protein is Small ribosomal subunit protein uS3.